A 236-amino-acid polypeptide reads, in one-letter code: Uridylate kinase (236 aa).

8–11 (KLSG) is an ATP binding site. Gly-51 is a binding site for UMP. ATP-binding residues include Gly-52 and Arg-56. Residues Asp-71 and 133-140 (TGRPFFTT) contribute to the UMP site. Positions 161, 167, and 170 each coordinate ATP.

This sequence belongs to the UMP kinase family. Homohexamer.

It is found in the cytoplasm. The enzyme catalyses UMP + ATP = UDP + ADP. The protein operates within pyrimidine metabolism; CTP biosynthesis via de novo pathway; UDP from UMP (UMPK route): step 1/1. With respect to regulation, inhibited by UTP. Its function is as follows. Catalyzes the reversible phosphorylation of UMP to UDP. The chain is Uridylate kinase from Mesomycoplasma hyopneumoniae (strain 232) (Mycoplasma hyopneumoniae).